The sequence spans 236 residues: Ribosome assembly factor mrt4 (236 aa).

Belongs to the universal ribosomal protein uL10 family. As to quaternary structure, associates with the pre-60S ribosomal particle.

Its subcellular location is the nucleus. It localises to the nucleolus. The protein localises to the cytoplasm. Functionally, component of the ribosome assembly machinery. Nuclear paralog of the ribosomal protein P0, it binds pre-60S subunits at an early stage of assembly in the nucleolus, and is replaced by P0 in cytoplasmic pre-60S subunits and mature 80S ribosomes. In Eremothecium gossypii (strain ATCC 10895 / CBS 109.51 / FGSC 9923 / NRRL Y-1056) (Yeast), this protein is Ribosome assembly factor mrt4.